We begin with the raw amino-acid sequence, 318 residues long: NADH-ubiquinone oxidoreductase chain 1 (318 aa).

The next 8 membrane-spanning stretches (helical) occupy residues 2 to 22 (FMIN…FLTL), 70 to 90 (MFII…IPLP), 100 to 120 (LGIL…LWSG), 147 to 167 (AIIL…TLII), 171 to 191 (YLWL…STLA), 217 to 237 (AGPF…MNIF), 253 to 273 (ELYS…FLWI), and 294 to 314 (LPLT…LSSI).

It belongs to the complex I subunit 1 family. Core subunit of respiratory chain NADH dehydrogenase (Complex I) which is composed of 45 different subunits.

It localises to the mitochondrion inner membrane. It catalyses the reaction a ubiquinone + NADH + 5 H(+)(in) = a ubiquinol + NAD(+) + 4 H(+)(out). Functionally, core subunit of the mitochondrial membrane respiratory chain NADH dehydrogenase (Complex I) which catalyzes electron transfer from NADH through the respiratory chain, using ubiquinone as an electron acceptor. Essential for the catalytic activity and assembly of complex I. The chain is NADH-ubiquinone oxidoreductase chain 1 (MT-ND1) from Equus caballus (Horse).